The sequence spans 305 residues: uncharacterized protein (305 aa).

Basic residues predominate over residues 1-10; the sequence is MLWAQRKKRK. Residues 1-30 form a disordered region; it reads MLWAQRKKRKATTETTEDKPAESHRPNDSW. Basic and acidic residues predominate over residues 16 to 27; it reads TEDKPAESHRPN. Ser-39 is modified (phosphoserine). Positions 92–101 are enriched in polar residues; that stretch reads QKISGTSVSK. The disordered stretch occupies residues 92–114; that stretch reads QKISGTSVSKEMQRESGKSPSME. Phosphoserine is present on Ser-158. Residues 197-208 show a composition bias toward low complexity; it reads SHHGNQSHQNHN. The tract at residues 197 to 305 is disordered; that stretch reads SHHGNQSHQN…VNRRNQIYDS (109 aa). 2 stretches are compositionally biased toward polar residues: residues 209–221 and 231–244; these read TYPC…SRSV and LSHQ…SHQN. A compositionally biased stretch (low complexity) spans 247–293; sequence GHPSQQGHSSHSNQQGHLGLSSQQGHPSQSSHQSHQGQPGHPNHQSH. Polar residues predominate over residues 294 to 305; sequence SLVNRRNQIYDS.

This is an uncharacterized protein from Rattus norvegicus (Rat).